A 250-amino-acid chain; its full sequence is Coproheme decarboxylase (250 aa).

Fe-coproporphyrin III contacts are provided by residues Arg-131, 145–149 (YPMNK), His-172, and Gln-185. The active site involves Tyr-145.

The protein belongs to the ChdC family. Type 1 subfamily. Fe-coproporphyrin III serves as cofactor.

The catalysed reaction is Fe-coproporphyrin III + 2 H2O2 + 2 H(+) = heme b + 2 CO2 + 4 H2O. The enzyme catalyses Fe-coproporphyrin III + H2O2 + H(+) = harderoheme III + CO2 + 2 H2O. It catalyses the reaction harderoheme III + H2O2 + H(+) = heme b + CO2 + 2 H2O. Its pathway is porphyrin-containing compound metabolism; protoheme biosynthesis. In terms of biological role, involved in coproporphyrin-dependent heme b biosynthesis. Catalyzes the decarboxylation of Fe-coproporphyrin III (coproheme) to heme b (protoheme IX), the last step of the pathway. The reaction occurs in a stepwise manner with a three-propionate intermediate. The chain is Coproheme decarboxylase from Staphylococcus aureus (strain MRSA252).